Reading from the N-terminus, the 317-residue chain is L-lactate dehydrogenase (317 aa).

NAD(+)-binding positions include V17, D38, K43, Y69, and 83–84 (GA). Residues Q86 and R92 each contribute to the substrate site. NAD(+) contacts are provided by residues S105, 122 to 124 (ATN), and S147. 124–127 (NPVD) provides a ligand contact to substrate. 152-155 (DTAR) contributes to the substrate binding site. R157 and H172 together coordinate beta-D-fructose 1,6-bisphosphate. Catalysis depends on H179, which acts as the Proton acceptor. Residue Y224 is modified to Phosphotyrosine. T233 is a substrate binding site.

The protein belongs to the LDH/MDH superfamily. LDH family. As to quaternary structure, homotetramer.

Its subcellular location is the cytoplasm. The enzyme catalyses (S)-lactate + NAD(+) = pyruvate + NADH + H(+). The protein operates within fermentation; pyruvate fermentation to lactate; (S)-lactate from pyruvate: step 1/1. Allosterically activated by fructose 1,6-bisphosphate (FBP). In terms of biological role, catalyzes the conversion of lactate to pyruvate. This is L-lactate dehydrogenase from Bacillus caldolyticus.